A 377-amino-acid polypeptide reads, in one-letter code: N-acetyldiaminopimelate deacetylase (377 aa).

Asp-70 is an active-site residue. The Proton acceptor role is filled by Glu-129.

It belongs to the peptidase M20A family. N-acetyldiaminopimelate deacetylase subfamily.

The enzyme catalyses N-acetyl-(2S,6S)-2,6-diaminopimelate + H2O = (2S,6S)-2,6-diaminopimelate + acetate. It functions in the pathway amino-acid biosynthesis; L-lysine biosynthesis via DAP pathway; LL-2,6-diaminopimelate from (S)-tetrahydrodipicolinate (acetylase route): step 3/3. In terms of biological role, catalyzes the conversion of N-acetyl-diaminopimelate to diaminopimelate and acetate. The protein is N-acetyldiaminopimelate deacetylase of Streptococcus thermophilus (strain CNRZ 1066).